We begin with the raw amino-acid sequence, 731 residues long: DNA ligase (731 aa).

NAD(+) is bound by residues 59 to 63 (DSEYD), 108 to 109 (SL), and Glu-142. Lys-144 acts as the N6-AMP-lysine intermediate in catalysis. NAD(+) contacts are provided by Arg-165, Glu-202, Lys-318, and Lys-342. Cys-434, Cys-437, Cys-452, and Cys-458 together coordinate Zn(2+). One can recognise a BRCT domain in the interval 645–731 (LASSPLSGKI…ENDGQDSIKI (87 aa)).

It belongs to the NAD-dependent DNA ligase family. LigA subfamily. Mg(2+) serves as cofactor. Mn(2+) is required as a cofactor.

The catalysed reaction is NAD(+) + (deoxyribonucleotide)n-3'-hydroxyl + 5'-phospho-(deoxyribonucleotide)m = (deoxyribonucleotide)n+m + AMP + beta-nicotinamide D-nucleotide.. DNA ligase that catalyzes the formation of phosphodiester linkages between 5'-phosphoryl and 3'-hydroxyl groups in double-stranded DNA using NAD as a coenzyme and as the energy source for the reaction. It is essential for DNA replication and repair of damaged DNA. This chain is DNA ligase, found in Zymomonas mobilis subsp. mobilis (strain ATCC 31821 / ZM4 / CP4).